Reading from the N-terminus, the 547-residue chain is MSELTELPAWQALWDHFAEAKHLHMRDLFAADPGRAERYSLEVGGLFLDYSKNRITDATLLGLMELAREAGLPARIKAMFKGEKINRTENRAVLHVALRNRTNSPIRVDGEDVMPKVNSVLERMGKFAHAVRSGDWLGFTNQPITDIVNIGIGGSDLGPLMVCSALKPFGHPRLNMHFVSNVDGAQLKETLKKVHPETTLFVVESKTFTTQETLTNALTAREWFLSHARDEGAVAKHFVAVSTNQKAVAEFGIDPANMFEFWNWVGGRYSLWSAIGLPIMLYLGEENFTELLNGAHIMDQHFMNAPFEQNMPVLLAMIGVWYINYYGGGSHVIAPYDQYLHRLPAFIQQLDMESNGKQVTLSGQPVDFETAPIIWGETGINGQHAFFQLLHQGTHISPIDLIASLGNRASLPGHHEILLANVFAQAEAFMRGKTADEVRAELAEQGLSGEEMEALVPHKVFGGNRPTNTLLMSRLDPRNLGSLIALYEHKIFVQGVIWHINSFDQWGVELGKQLAKTIHAELTGKLEQAEHDSSTRRLIQLYRKANG.

Catalysis depends on Glu353, which acts as the Proton donor. Catalysis depends on residues His384 and Lys512.

This sequence belongs to the GPI family.

It is found in the cytoplasm. The enzyme catalyses alpha-D-glucose 6-phosphate = beta-D-fructose 6-phosphate. Its pathway is carbohydrate biosynthesis; gluconeogenesis. The protein operates within carbohydrate degradation; glycolysis; D-glyceraldehyde 3-phosphate and glycerone phosphate from D-glucose: step 2/4. Catalyzes the reversible isomerization of glucose-6-phosphate to fructose-6-phosphate. The protein is Glucose-6-phosphate isomerase 1 of Chromobacterium violaceum (strain ATCC 12472 / DSM 30191 / JCM 1249 / CCUG 213 / NBRC 12614 / NCIMB 9131 / NCTC 9757 / MK).